Consider the following 140-residue polypeptide: MNRLDHIGIAVFSIKDARSFYENVLGLAFLHQETVEEQKVNVAFFQAGSVKLELIEPLTADSPVHLFLEKKGQGLHHIAFLCNCLSEQLQALSDQHVQLIDRFPRQGANGKKIAFISPRETNGVLVELCEPKGDQHNEHE.

The VOC domain occupies 3–131 (RLDHIGIAVF…NGVLVELCEP (129 aa)). A divalent metal cation-binding residues include histidine 6, glutamate 53, histidine 77, and glutamate 127.

This sequence belongs to the methylmalonyl-CoA epimerase family.

This is an uncharacterized protein from Bacillus subtilis (strain 168).